Here is a 182-residue protein sequence, read N- to C-terminus: A-type ATP synthase subunit E (182 aa).

The protein belongs to the V-ATPase E subunit family. In terms of assembly, has multiple subunits with at least A(3), B(3), C, D, E, F, H, I and proteolipid K(x).

It localises to the cell membrane. Functionally, component of the A-type ATP synthase that produces ATP from ADP in the presence of a proton gradient across the membrane. This Methanothrix thermoacetophila (strain DSM 6194 / JCM 14653 / NBRC 101360 / PT) (Methanosaeta thermophila) protein is A-type ATP synthase subunit E.